The chain runs to 661 residues: UvrABC system protein B (661 aa).

One can recognise a Helicase ATP-binding domain in the interval 25-182; it reads AGLSSKKRSQ…NDLINLQYER (158 aa). 38-45 lines the ATP pocket; it reads GITGSGKT. The short motif at 91-114 is the Beta-hairpin element; that stretch reads YYDYYQPEAYIARTDTFIEKDSSI. The 163-residue stretch at 430 to 592 folds into the Helicase C-terminal domain; that stretch reads QVEDLISEIQ…IIPKTINRAI (163 aa). The UVR domain occupies 621–656; the sequence is KTHIDKLKKEMLKAASNLEFEQAVKLRDQLKTLEAA.

The protein belongs to the UvrB family. In terms of assembly, forms a heterotetramer with UvrA during the search for lesions. Interacts with UvrC in an incision complex.

The protein localises to the cytoplasm. In terms of biological role, the UvrABC repair system catalyzes the recognition and processing of DNA lesions. A damage recognition complex composed of 2 UvrA and 2 UvrB subunits scans DNA for abnormalities. Upon binding of the UvrA(2)B(2) complex to a putative damaged site, the DNA wraps around one UvrB monomer. DNA wrap is dependent on ATP binding by UvrB and probably causes local melting of the DNA helix, facilitating insertion of UvrB beta-hairpin between the DNA strands. Then UvrB probes one DNA strand for the presence of a lesion. If a lesion is found the UvrA subunits dissociate and the UvrB-DNA preincision complex is formed. This complex is subsequently bound by UvrC and the second UvrB is released. If no lesion is found, the DNA wraps around the other UvrB subunit that will check the other stand for damage. The polypeptide is UvrABC system protein B (Rickettsia peacockii (strain Rustic)).